The sequence spans 255 residues: ATP synthase subunit a (255 aa).

Residues 1–7 (MMFNNII) constitute a propeptide, removed in mature form. 6 consecutive transmembrane segments (helical) span residues 35-55 (FGFYIIISTIIILTLHLLITY), 91-111 (YFPFIYGLFIFILMNNLLGLI), 120-140 (HFILTFFISFTVVLGATILGF), 147-167 (FFSLFVPSGCPLGLLPLLVLI), 177-197 (VSLGLRLSANILSGHMLLVIL), and 208-228 (GIFYFLIGLIPLAFIFAFSGL).

Belongs to the ATPase A chain family. F-type ATPases have 2 components, CF(1) - the catalytic core - and CF(0) - the membrane proton channel. CF(1) has five subunits: alpha(3), beta(3), gamma(1), delta(1), epsilon(1). CF(0) has three main subunits: a, b and c.

It localises to the mitochondrion inner membrane. In terms of biological role, mitochondrial membrane ATP synthase (F(1)F(0) ATP synthase or Complex V) produces ATP from ADP in the presence of a proton gradient across the membrane which is generated by electron transport complexes of the respiratory chain. F-type ATPases consist of two structural domains, F(1) - containing the extramembraneous catalytic core and F(0) - containing the membrane proton channel, linked together by a central stalk and a peripheral stalk. During catalysis, ATP synthesis in the catalytic domain of F(1) is coupled via a rotary mechanism of the central stalk subunits to proton translocation. Key component of the proton channel; it may play a direct role in the translocation of protons across the membrane. The polypeptide is ATP synthase subunit a (ATP6) (Trichophyton rubrum (Athlete's foot fungus)).